We begin with the raw amino-acid sequence, 51 residues long: Insulin (51 aa).

3 disulfides stabilise this stretch: Cys7–Cys37, Cys19–Cys50, and Cys36–Cys41.

This sequence belongs to the insulin family. Heterodimer of a B chain and an A chain linked by two disulfide bonds.

Its subcellular location is the secreted. In terms of biological role, insulin decreases blood glucose concentration. It increases cell permeability to monosaccharides, amino acids and fatty acids. It accelerates glycolysis, the pentose phosphate cycle, and glycogen synthesis in liver. The sequence is that of Insulin (ins) from Anguilla rostrata (American eel).